The primary structure comprises 729 residues: Probable pre-mRNA-splicing factor ATP-dependent RNA helicase DEAH3 (729 aa).

A Helicase ATP-binding domain is found at 75–244 (LNTLNSNQTL…FSGAPLMKVP (170 aa)). Position 88-95 (88-95 (GETGSGKT)) interacts with ATP. The DEAH box motif lies at 191 to 194 (DEAH). The Helicase C-terminal domain maps to 269 to 449 (TVVQIHMCEP…NTVLTLKKLG (181 aa)).

Belongs to the DEAD box helicase family. DEAH subfamily. PRP43 sub-subfamily.

It carries out the reaction ATP + H2O = ADP + phosphate + H(+). In terms of biological role, may be involved in pre-mRNA splicing. The sequence is that of Probable pre-mRNA-splicing factor ATP-dependent RNA helicase DEAH3 from Arabidopsis thaliana (Mouse-ear cress).